Reading from the N-terminus, the 451-residue chain is UDP-N-acetylmuramoylalanine--D-glutamate ligase (451 aa).

Residue 119-125 (GSNGKTT) coordinates ATP.

Belongs to the MurCDEF family.

It is found in the cytoplasm. It catalyses the reaction UDP-N-acetyl-alpha-D-muramoyl-L-alanine + D-glutamate + ATP = UDP-N-acetyl-alpha-D-muramoyl-L-alanyl-D-glutamate + ADP + phosphate + H(+). The protein operates within cell wall biogenesis; peptidoglycan biosynthesis. Cell wall formation. Catalyzes the addition of glutamate to the nucleotide precursor UDP-N-acetylmuramoyl-L-alanine (UMA). The chain is UDP-N-acetylmuramoylalanine--D-glutamate ligase from Geobacillus kaustophilus (strain HTA426).